A 346-amino-acid chain; its full sequence is N-acetyl-gamma-glutamyl-phosphate reductase (346 aa).

The active site involves Cys154.

It belongs to the NAGSA dehydrogenase family. Type 1 subfamily.

The protein resides in the cytoplasm. It carries out the reaction N-acetyl-L-glutamate 5-semialdehyde + phosphate + NADP(+) = N-acetyl-L-glutamyl 5-phosphate + NADPH + H(+). It functions in the pathway amino-acid biosynthesis; L-arginine biosynthesis; N(2)-acetyl-L-ornithine from L-glutamate: step 3/4. In terms of biological role, catalyzes the NADPH-dependent reduction of N-acetyl-5-glutamyl phosphate to yield N-acetyl-L-glutamate 5-semialdehyde. This chain is N-acetyl-gamma-glutamyl-phosphate reductase, found in Rhodopirellula baltica (strain DSM 10527 / NCIMB 13988 / SH1).